The following is a 95-amino-acid chain: Large ribosomal subunit protein bL27 (95 aa).

The segment at 1 to 24 (MAHKKGTGSTRNGRDSNSQRLGVK) is disordered. Residues 7-20 (TGSTRNGRDSNSQR) show a composition bias toward polar residues.

This sequence belongs to the bacterial ribosomal protein bL27 family.

The protein is Large ribosomal subunit protein bL27 of Trichodesmium erythraeum (strain IMS101).